The chain runs to 319 residues: L-lactate dehydrogenase (319 aa).

NAD(+) contacts are provided by residues valine 17, aspartate 38, lysine 43, tyrosine 69, and 83 to 84 (GA). Substrate-binding residues include glutamine 86 and arginine 92. NAD(+) is bound by residues threonine 105, 122–124 (ATN), and serine 147. 124–127 (NPVD) serves as a coordination point for substrate. 152-155 (DTAR) serves as a coordination point for substrate. Arginine 157 and histidine 172 together coordinate beta-D-fructose 1,6-bisphosphate. The active-site Proton acceptor is the histidine 179. At tyrosine 224 the chain carries Phosphotyrosine. Threonine 233 serves as a coordination point for substrate.

The protein belongs to the LDH/MDH superfamily. LDH family. In terms of assembly, homotetramer.

It is found in the cytoplasm. It catalyses the reaction (S)-lactate + NAD(+) = pyruvate + NADH + H(+). The protein operates within fermentation; pyruvate fermentation to lactate; (S)-lactate from pyruvate: step 1/1. Its activity is regulated as follows. Allosterically activated by fructose 1,6-bisphosphate (FBP). In terms of biological role, catalyzes the conversion of lactate to pyruvate. This Geobacillus sp. (strain WCH70) protein is L-lactate dehydrogenase.